Here is a 435-residue protein sequence, read N- to C-terminus: Putative F-box/kelch-repeat protein At1g20790 (435 aa).

The 49-residue stretch at 1–49 folds into the F-box domain; the sequence is MKRLPLHLLDEILFNLDPKSLGKMRCTNKSINTHISDDPNFKFEYFSRI. Kelch repeat units lie at residues 192–238 and 280–335; these read PVYV…CTGD and LYWN…LFKP.

This is Putative F-box/kelch-repeat protein At1g20790 from Arabidopsis thaliana (Mouse-ear cress).